The following is a 152-amino-acid chain: Histone H2B.1 (152 aa).

The span at 1–23 (MAPKAEKKPAEKKPAAGEEKSAE) shows a compositional bias: basic and acidic residues. The segment at 1–60 (MAPKAEKKPAEKKPAAGEEKSAEKAPAGKKPKAEKRLPASKASSKEGGAGDKKGRKKAKK) is disordered. N6-acetyllysine occurs at positions 7 and 35. Residue K148 forms a Glycyl lysine isopeptide (Lys-Gly) (interchain with G-Cter in ubiquitin) linkage.

The protein belongs to the histone H2B family. The nucleosome is a histone octamer containing two molecules each of H2A, H2B, H3 and H4 assembled in one H3-H4 heterotetramer and two H2A-H2B heterodimers. The octamer wraps approximately 147 bp of DNA. In terms of processing, can be acetylated to form H2BK6ac and H2BK33ac. Monoubiquitinated by BRE1 to form H2BK143ub1 and deubiquitinated by UBP26. Required for heterochromatic histone H3 di- and trimethylation at H3K4me. May give a specific tag for epigenetic transcriptional activation.

It localises to the nucleus. The protein resides in the chromosome. Its function is as follows. Core component of nucleosome. Nucleosomes wrap and compact DNA into chromatin, limiting DNA accessibility to the cellular machineries which require DNA as a template. Histones thereby play a central role in transcription regulation, DNA repair, DNA replication and chromosomal stability. DNA accessibility is regulated via a complex set of post-translational modifications of histones, also called histone code, and nucleosome remodeling. This is Histone H2B.1 from Oryza sativa subsp. indica (Rice).